A 186-amino-acid chain; its full sequence is Ribosome-recycling factor (186 aa).

Belongs to the RRF family.

The protein resides in the cytoplasm. Responsible for the release of ribosomes from messenger RNA at the termination of protein biosynthesis. May increase the efficiency of translation by recycling ribosomes from one round of translation to another. This Chlorobium phaeobacteroides (strain BS1) protein is Ribosome-recycling factor.